We begin with the raw amino-acid sequence, 782 residues long: Protein VAC14 homolog (782 aa).

The residue at position 1 (M1) is an N-acetylmethionine. 4 HEAT repeats span residues 5–42 (KDFA…EFVA), 89–126 (LYLK…VARG), 171–208 (FDLV…VPDI), and 212–249 (DYLP…EIKK). At T11 the chain carries Phosphothreonine. Disordered stretches follow at residues 335–372 (EDDE…DGSC) and 471–517 (SSPA…LECS). An HEAT 5 repeat occupies 438–475 (RHTDSLFPILLQTLSDESDEVILKDLEVLAEIASSPAG). A compositionally biased stretch (low complexity) spans 478–488 (DDPGPLDGPDL). T499 is subject to Phosphothreonine. Over residues 506 to 517 (LNTSGTKGLECS) the composition is skewed to polar residues. Phosphoserine is present on S517. The stretch at 560 to 598 (LNAENIFHSMADILLREEDLKFASTMVHALNTILLTSTE) is one HEAT 6 repeat. Position 743 is a phosphoserine (S743). The tract at residues 773–777 (GDHLD) is mediates interaction with the PDZ domain of NOS1.

The protein belongs to the VAC14 family. Forms pentamers. Component of the PI(3,5)P2 regulatory complex/PAS complex, at least composed of PIKFYVE, FIG4 and VAC14. VAC14 nucleates the assembly of the complex and serves as a scaffold by pentamerizing into a star-shaped structure, which can bind a single copy each of PIKFYVE and FIG4 and coordinates their activities. Interacts with NOS1. In terms of assembly, (Microbial infection) Interacts with HTLV-1 Tax. Ubiquitously expressed.

Its subcellular location is the endosome membrane. It localises to the microsome membrane. Scaffold protein component of the PI(3,5)P2 regulatory complex which regulates both the synthesis and turnover of phosphatidylinositol 3,5-bisphosphate (PtdIns(3,5)P2). Pentamerizes into a star-shaped structure and nucleates the assembly of the complex. The pentamer binds a single copy each of PIKFYVE and FIG4 and coordinates both PIKfyve kinase activity and FIG4 phosphatase activity, being required to maintain normal levels of phosphatidylinositol 3-phosphate (PtdIns(3)P) and phosphatidylinositol 5-phosphate (PtdIns(5)P). Plays a role in the biogenesis of endosome carrier vesicles (ECV) / multivesicular bodies (MVB) transport intermediates from early endosomes. In Homo sapiens (Human), this protein is Protein VAC14 homolog (VAC14).